Here is a 98-residue protein sequence, read N- to C-terminus: Integration host factor subunit alpha (98 aa).

The segment at 51-71 (NFDLRDKNERPGRNPKTGEDI) is disordered. Positions 53–69 (DLRDKNERPGRNPKTGE) are enriched in basic and acidic residues.

The protein belongs to the bacterial histone-like protein family. In terms of assembly, heterodimer of an alpha and a beta chain.

This protein is one of the two subunits of integration host factor, a specific DNA-binding protein that functions in genetic recombination as well as in transcriptional and translational control. This Vibrio cholerae serotype O1 (strain ATCC 39541 / Classical Ogawa 395 / O395) protein is Integration host factor subunit alpha.